The primary structure comprises 233 residues: Purine nucleoside phosphorylase DeoD-type (233 aa).

His4 serves as a coordination point for a purine D-ribonucleoside. Residues Gly20, Arg24, Arg43, and 87-90 (RVGT) each bind phosphate. A purine D-ribonucleoside contacts are provided by residues 178–180 (EME) and 202–203 (SD). Asp203 (proton donor) is an active-site residue.

It belongs to the PNP/UDP phosphorylase family. In terms of assembly, homohexamer; trimer of homodimers.

It carries out the reaction a purine D-ribonucleoside + phosphate = a purine nucleobase + alpha-D-ribose 1-phosphate. The catalysed reaction is a purine 2'-deoxy-D-ribonucleoside + phosphate = a purine nucleobase + 2-deoxy-alpha-D-ribose 1-phosphate. Its function is as follows. Catalyzes the reversible phosphorolytic breakdown of the N-glycosidic bond in the beta-(deoxy)ribonucleoside molecules, with the formation of the corresponding free purine bases and pentose-1-phosphate. This chain is Purine nucleoside phosphorylase DeoD-type, found in Listeria innocua serovar 6a (strain ATCC BAA-680 / CLIP 11262).